The sequence spans 116 residues: Large ribosomal subunit protein bL19 (116 aa).

Belongs to the bacterial ribosomal protein bL19 family.

This protein is located at the 30S-50S ribosomal subunit interface and may play a role in the structure and function of the aminoacyl-tRNA binding site. The protein is Large ribosomal subunit protein bL19 of Streptomyces griseus subsp. griseus (strain JCM 4626 / CBS 651.72 / NBRC 13350 / KCC S-0626 / ISP 5235).